Consider the following 372-residue polypeptide: MALNDFHVSEPYTLGIELEMQVINPPGYDLSQDSSTLIDAVKSRLTAGEIKHDITESMLEMATGVCRDIDQAAAQLSAMQHVILQAASEHHLGICGGGTHPFQKWQRQEVCDNERYQRTLENFGYLIQQATVFGQHVHVGCANGDDAIYLLHGLSHFVPHFIALSAASPYMQGSDTRFACARLNIFSAFPDNGPMPWVSNWQEFAGLFRRLSYTTMIDSIKDLHWDIRPSPAFGTVEVRVMDTPLTLDHAINMAGLIQATAHWLLTERPFKPQEQDYLLYKFNRFQACRYGLEGVLTDAYTGDRRRLADDTLRLLDNVTPSARKLGADSAIDALRLQVKKGGNEAQYMREFIADGGSLIGLVQKHCEIWAGQ.

It belongs to the glutamate--cysteine ligase type 2 family. YbdK subfamily. As to quaternary structure, homodimer.

The catalysed reaction is L-cysteine + L-glutamate + ATP = gamma-L-glutamyl-L-cysteine + ADP + phosphate + H(+). Functionally, ATP-dependent carboxylate-amine ligase which exhibits weak glutamate--cysteine ligase activity. This Salmonella paratyphi C (strain RKS4594) protein is Putative glutamate--cysteine ligase 2 (ybdK).